A 318-amino-acid chain; its full sequence is Methionyl-tRNA formyltransferase (318 aa).

112 to 115 (SILP) provides a ligand contact to (6S)-5,6,7,8-tetrahydrofolate.

Belongs to the Fmt family.

It catalyses the reaction L-methionyl-tRNA(fMet) + (6R)-10-formyltetrahydrofolate = N-formyl-L-methionyl-tRNA(fMet) + (6S)-5,6,7,8-tetrahydrofolate + H(+). Attaches a formyl group to the free amino group of methionyl-tRNA(fMet). The formyl group appears to play a dual role in the initiator identity of N-formylmethionyl-tRNA by promoting its recognition by IF2 and preventing the misappropriation of this tRNA by the elongation apparatus. In Shewanella baltica (strain OS155 / ATCC BAA-1091), this protein is Methionyl-tRNA formyltransferase.